The primary structure comprises 439 residues: Serine--tRNA ligase (439 aa).

An L-serine-binding site is contributed by 247 to 249; sequence TSE. 278–280 serves as a coordination point for ATP; it reads RSE. Glu301 is an L-serine binding site. 365 to 368 is an ATP binding site; sequence EISS. Residue Ser400 coordinates L-serine.

Belongs to the class-II aminoacyl-tRNA synthetase family. Type-1 seryl-tRNA synthetase subfamily. In terms of assembly, homodimer. The tRNA molecule binds across the dimer.

It localises to the cytoplasm. It catalyses the reaction tRNA(Ser) + L-serine + ATP = L-seryl-tRNA(Ser) + AMP + diphosphate + H(+). The enzyme catalyses tRNA(Sec) + L-serine + ATP = L-seryl-tRNA(Sec) + AMP + diphosphate + H(+). It participates in aminoacyl-tRNA biosynthesis; selenocysteinyl-tRNA(Sec) biosynthesis; L-seryl-tRNA(Sec) from L-serine and tRNA(Sec): step 1/1. In terms of biological role, catalyzes the attachment of serine to tRNA(Ser). Is also able to aminoacylate tRNA(Sec) with serine, to form the misacylated tRNA L-seryl-tRNA(Sec), which will be further converted into selenocysteinyl-tRNA(Sec). The protein is Serine--tRNA ligase of Paracidovorax citrulli (strain AAC00-1) (Acidovorax citrulli).